We begin with the raw amino-acid sequence, 291 residues long: N-acetylmannosamine kinase (291 aa).

Residues 5–12 (AVDIGGTK) and 132–139 (GVGGGIVV) contribute to the ATP site. Zn(2+)-binding residues include His-156, Cys-166, Cys-168, and Cys-173.

Belongs to the ROK (NagC/XylR) family. NanK subfamily. Homodimer.

It carries out the reaction an N-acyl-D-mannosamine + ATP = an N-acyl-D-mannosamine 6-phosphate + ADP + H(+). It functions in the pathway amino-sugar metabolism; N-acetylneuraminate degradation; D-fructose 6-phosphate from N-acetylneuraminate: step 2/5. Functionally, catalyzes the phosphorylation of N-acetylmannosamine (ManNAc) to ManNAc-6-P. This chain is N-acetylmannosamine kinase (nanK2), found in Escherichia coli O6:H1 (strain CFT073 / ATCC 700928 / UPEC).